The sequence spans 312 residues: Aspartate carbamoyltransferase catalytic subunit (312 aa).

Arg-57 and Thr-58 together coordinate carbamoyl phosphate. Lys-85 is a binding site for L-aspartate. Carbamoyl phosphate-binding residues include Arg-107, His-135, and Gln-138. The L-aspartate site is built by Arg-168 and Arg-222. Positions 264 and 265 each coordinate carbamoyl phosphate.

The protein belongs to the aspartate/ornithine carbamoyltransferase superfamily. ATCase family. As to quaternary structure, heterododecamer (2C3:3R2) of six catalytic PyrB chains organized as two trimers (C3), and six regulatory PyrI chains organized as three dimers (R2).

The catalysed reaction is carbamoyl phosphate + L-aspartate = N-carbamoyl-L-aspartate + phosphate + H(+). It participates in pyrimidine metabolism; UMP biosynthesis via de novo pathway; (S)-dihydroorotate from bicarbonate: step 2/3. In terms of biological role, catalyzes the condensation of carbamoyl phosphate and aspartate to form carbamoyl aspartate and inorganic phosphate, the committed step in the de novo pyrimidine nucleotide biosynthesis pathway. The protein is Aspartate carbamoyltransferase catalytic subunit of Carboxydothermus hydrogenoformans (strain ATCC BAA-161 / DSM 6008 / Z-2901).